Here is an 87-residue protein sequence, read N- to C-terminus: Small ribosomal subunit protein uS19 (87 aa).

Belongs to the universal ribosomal protein uS19 family.

Protein S19 forms a complex with S13 that binds strongly to the 16S ribosomal RNA. The protein is Small ribosomal subunit protein uS19 (rpsS) of Mycoplasma pneumoniae (strain ATCC 29342 / M129 / Subtype 1) (Mycoplasmoides pneumoniae).